Reading from the N-terminus, the 173-residue chain is Telomerase RNA component interacting RNase (173 aa).

Over residues 1–12 (MAARGRRAEPPG) the composition is skewed to basic and acidic residues. The segment at 1-119 (MAARGRRAEP…LSFVGKRRGG (119 aa)) is disordered. 2 stretches are compositionally biased toward low complexity: residues 14–23 (EAPGPAGSGR) and 43–52 (SGSSPVSSGV). Residues 64–79 (LFKRKMEEEQRQRQEE) show a composition bias toward basic and acidic residues. Residues 80 to 90 (PPPGPQRPDPP) are compositionally biased toward pro residues. An N6-acetyllysine modification is found at Lys143.

In terms of assembly, part of the telomerase RNA 3' end complex which contains about 488 proteins.

In terms of biological role, exoribonuclease that is part of the telomerase RNA 3' end processing complex and which has the ability to cleave all four unpaired RNA nucleotides from the 5' end or 3' end with higher efficiency for purine bases. This is Telomerase RNA component interacting RNase from Mus musculus (Mouse).